The primary structure comprises 311 residues: Malate dehydrogenase (311 aa).

NAD(+)-binding positions include 7–13 and aspartate 34; that span reads GAAGGIG. Substrate contacts are provided by arginine 81 and arginine 87. Residues asparagine 94 and 117 to 119 contribute to the NAD(+) site; that span reads ITN. Asparagine 119 and arginine 153 together coordinate substrate. Residue histidine 177 is the Proton acceptor of the active site. Methionine 227 is a binding site for NAD(+).

This sequence belongs to the LDH/MDH superfamily. MDH type 1 family. Homodimer.

The catalysed reaction is (S)-malate + NAD(+) = oxaloacetate + NADH + H(+). Functionally, catalyzes the reversible oxidation of malate to oxaloacetate. The polypeptide is Malate dehydrogenase (Aliivibrio fischeri (strain MJ11) (Vibrio fischeri)).